Reading from the N-terminus, the 320-residue chain is MTYTYLHNKFLSIIPKYKNLIKPLSILIALSGGKDSLCLVKLIEDFNNTYNHFSRIEYIYIDHQWRSDSKQNIKHLLNYISITNNNTYIYQINKMEISEANMRNIRYQAIVRHAIQNSHDIIVTGHNQTDQVETFLLNLMRGTGLEGLSSLPYIRKITDQIQVIRPLIHINTGDVLWFCRKFNLPIWSDKTNFYYTNFRNRIRYELLPYLKEYFHPKIESNIINFLSLSSIENEYIKQNSIKLYLASRHSHYIAINYKIIKNQHLALQKRVLNIFFYHNFNKYVNSHILNQLIKMKYQRKLTIVWETLRIKIYKNWIYIQ.

31–36 (SGGKDS) lines the ATP pocket.

The protein belongs to the tRNA(Ile)-lysidine synthase family.

It localises to the plastid. It is found in the chloroplast. The enzyme catalyses cytidine(34) in tRNA(Ile2) + L-lysine + ATP = lysidine(34) in tRNA(Ile2) + AMP + diphosphate + H(+). Functionally, ligates lysine onto the cytidine present at position 34 of the AUA codon-specific tRNA(Ile) that contains the anticodon CAU, in an ATP-dependent manner. Cytidine is converted to lysidine, thus changing the amino acid specificity of the tRNA from methionine to isoleucine. The polypeptide is tRNA(Ile)-lysidine synthase, chloroplastic (Gracilaria tenuistipitata var. liui (Red alga)).